The primary structure comprises 40 residues: Photosystem II reaction center protein J (40 aa).

Residues 8–28 (IPLWLIGTVTGILVIGLIGVF) traverse the membrane as a helical segment.

This sequence belongs to the PsbJ family. In terms of assembly, PSII is composed of 1 copy each of membrane proteins PsbA, PsbB, PsbC, PsbD, PsbE, PsbF, PsbH, PsbI, PsbJ, PsbK, PsbL, PsbM, PsbT, PsbX, PsbY, PsbZ, Psb30/Ycf12, at least 3 peripheral proteins of the oxygen-evolving complex and a large number of cofactors. It forms dimeric complexes.

It is found in the plastid. Its subcellular location is the chloroplast thylakoid membrane. Its function is as follows. One of the components of the core complex of photosystem II (PSII). PSII is a light-driven water:plastoquinone oxidoreductase that uses light energy to abstract electrons from H(2)O, generating O(2) and a proton gradient subsequently used for ATP formation. It consists of a core antenna complex that captures photons, and an electron transfer chain that converts photonic excitation into a charge separation. The protein is Photosystem II reaction center protein J of Nymphaea alba (White water-lily).